A 175-amino-acid polypeptide reads, in one-letter code: Adenine phosphoribosyltransferase (175 aa).

The protein belongs to the purine/pyrimidine phosphoribosyltransferase family. As to quaternary structure, homodimer.

Its subcellular location is the cytoplasm. The catalysed reaction is AMP + diphosphate = 5-phospho-alpha-D-ribose 1-diphosphate + adenine. The protein operates within purine metabolism; AMP biosynthesis via salvage pathway; AMP from adenine: step 1/1. Functionally, catalyzes a salvage reaction resulting in the formation of AMP, that is energically less costly than de novo synthesis. The chain is Adenine phosphoribosyltransferase from Oenococcus oeni (strain ATCC BAA-331 / PSU-1).